Here is a 156-residue protein sequence, read N- to C-terminus: Small ribosomal subunit protein uS7 (156 aa).

The protein belongs to the universal ribosomal protein uS7 family. In terms of assembly, part of the 30S ribosomal subunit. Contacts proteins S9 and S11.

Its function is as follows. One of the primary rRNA binding proteins, it binds directly to 16S rRNA where it nucleates assembly of the head domain of the 30S subunit. Is located at the subunit interface close to the decoding center, probably blocks exit of the E-site tRNA. The chain is Small ribosomal subunit protein uS7 from Rhodopseudomonas palustris (strain BisB18).